Here is a 297-residue protein sequence, read N- to C-terminus: Acetylglutamate kinase (297 aa).

Substrate contacts are provided by residues 68–69, arginine 90, and asparagine 195; that span reads GG.

The protein belongs to the acetylglutamate kinase family. ArgB subfamily.

Its subcellular location is the cytoplasm. It carries out the reaction N-acetyl-L-glutamate + ATP = N-acetyl-L-glutamyl 5-phosphate + ADP. It participates in amino-acid biosynthesis; L-arginine biosynthesis; N(2)-acetyl-L-ornithine from L-glutamate: step 2/4. Its function is as follows. Catalyzes the ATP-dependent phosphorylation of N-acetyl-L-glutamate. In Chelativorans sp. (strain BNC1), this protein is Acetylglutamate kinase.